Consider the following 314-residue polypeptide: 4-hydroxy-3-methylbut-2-enyl diphosphate reductase (314 aa).

C12 contributes to the [4Fe-4S] cluster binding site. (2E)-4-hydroxy-3-methylbut-2-enyl diphosphate-binding residues include H41 and H74. H41 and H74 together coordinate dimethylallyl diphosphate. Positions 41 and 74 each coordinate isopentenyl diphosphate. C96 contributes to the [4Fe-4S] cluster binding site. Position 124 (H124) interacts with (2E)-4-hydroxy-3-methylbut-2-enyl diphosphate. Residue H124 participates in dimethylallyl diphosphate binding. H124 contacts isopentenyl diphosphate. The active-site Proton donor is the E126. T167 provides a ligand contact to (2E)-4-hydroxy-3-methylbut-2-enyl diphosphate. Position 197 (C197) interacts with [4Fe-4S] cluster. 4 residues coordinate (2E)-4-hydroxy-3-methylbut-2-enyl diphosphate: S225, S226, N227, and S269. 4 residues coordinate dimethylallyl diphosphate: S225, S226, N227, and S269. The isopentenyl diphosphate site is built by S225, S226, N227, and S269.

This sequence belongs to the IspH family. Requires [4Fe-4S] cluster as cofactor.

It carries out the reaction isopentenyl diphosphate + 2 oxidized [2Fe-2S]-[ferredoxin] + H2O = (2E)-4-hydroxy-3-methylbut-2-enyl diphosphate + 2 reduced [2Fe-2S]-[ferredoxin] + 2 H(+). The catalysed reaction is dimethylallyl diphosphate + 2 oxidized [2Fe-2S]-[ferredoxin] + H2O = (2E)-4-hydroxy-3-methylbut-2-enyl diphosphate + 2 reduced [2Fe-2S]-[ferredoxin] + 2 H(+). It participates in isoprenoid biosynthesis; dimethylallyl diphosphate biosynthesis; dimethylallyl diphosphate from (2E)-4-hydroxy-3-methylbutenyl diphosphate: step 1/1. It functions in the pathway isoprenoid biosynthesis; isopentenyl diphosphate biosynthesis via DXP pathway; isopentenyl diphosphate from 1-deoxy-D-xylulose 5-phosphate: step 6/6. In terms of biological role, catalyzes the conversion of 1-hydroxy-2-methyl-2-(E)-butenyl 4-diphosphate (HMBPP) into a mixture of isopentenyl diphosphate (IPP) and dimethylallyl diphosphate (DMAPP). Acts in the terminal step of the DOXP/MEP pathway for isoprenoid precursor biosynthesis. This Actinobacillus pleuropneumoniae serotype 3 (strain JL03) protein is 4-hydroxy-3-methylbut-2-enyl diphosphate reductase.